The primary structure comprises 199 residues: MTGFKQHKGIAVPLDSANVDTDAIIPKQFLQKVNRIGFGKHLFHDWRFLDDAGQQPNPEFVLNQPRYAGASILLARENFGCGSSREHAPWALADYGFKTLIASSFADIFYGNAINNGLVPVRLKEEEVDLLFQLVATQPGIEIEVDLEANQVRAGELSFGFEIDEFRRYCLLNGLDAIGLTLQHEATISAFEAKQPSWI.

Belongs to the LeuD family. LeuD type 1 subfamily. In terms of assembly, heterodimer of LeuC and LeuD.

The catalysed reaction is (2R,3S)-3-isopropylmalate = (2S)-2-isopropylmalate. It participates in amino-acid biosynthesis; L-leucine biosynthesis; L-leucine from 3-methyl-2-oxobutanoate: step 2/4. Its function is as follows. Catalyzes the isomerization between 2-isopropylmalate and 3-isopropylmalate, via the formation of 2-isopropylmaleate. The sequence is that of 3-isopropylmalate dehydratase small subunit from Aeromonas salmonicida (strain A449).